The sequence spans 555 residues: 5'-nucleotidase-related protein (555 aa).

The N-terminal stretch at 1–25 is a signal peptide; the sequence is MKSLIGTLGLYCLFILTNNVVSSYG. Positions 38, 40, and 91 each coordinate a divalent metal cation. The N-linked (GlcNAc...) asparagine glycan is linked to Asn105. A divalent metal cation is bound at residue Asn123. An N-linked (GlcNAc...) asparagine glycan is attached at Asn198. His225 and His249 together coordinate a divalent metal cation. The N-linked (GlcNAc...) asparagine glycan is linked to Asn295. AMP-binding residues include Arg358, Arg402, and Phe421. The N-linked (GlcNAc...) asparagine glycan is linked to Asn465. AMP is bound by residues Phe505 and Asp511.

The protein belongs to the 5'-nucleotidase family. Mg(2+) serves as cofactor. Mn(2+) is required as a cofactor. Salivary gland (at protein level). Saliva (at protein level).

The protein localises to the secreted. It catalyses the reaction a ribonucleoside 5'-triphosphate + 2 H2O = a ribonucleoside 5'-phosphate + 2 phosphate + 2 H(+). DEPC (2 mM), sodium fluoride (10 mM) and 4,4'-Diisothiocyano-2,2'-stilbenedisulfonic acid (DIDS, 100 uM) nearly completely abrogate activity. Concanavalin A enhances activity. Its function is as follows. Facilitates hematophagy by inhibiting ADP-dependent platelet aggregation and promoting disaggregation of ADP-stimulated platelets in the host. Cleaves adenosine triphosphate (ATP) and adenosine diphosphate (ADP) to adenosine monophosphate (AMP) and inorganic phosphate. Interacts with fibrinogen receptor integrin alpha-IIb/beta-3 (ITGA2B/ITGB3). This is 5'-nucleotidase-related protein from Glossina morsitans morsitans (Savannah tsetse fly).